Here is a 31-residue protein sequence, read N- to C-terminus: Cytochrome b6-f complex subunit 6 (31 aa).

A helical transmembrane segment spans residues 4-24; it reads LISYISLLAGFVIIASVFYLA.

The protein belongs to the PetL family. As to quaternary structure, the 4 large subunits of the cytochrome b6-f complex are cytochrome b6, subunit IV (17 kDa polypeptide, PetD), cytochrome f and the Rieske protein, while the 4 small subunits are PetG, PetL, PetM and PetN. The complex functions as a dimer.

It is found in the plastid. The protein resides in the chloroplast thylakoid membrane. Functionally, component of the cytochrome b6-f complex, which mediates electron transfer between photosystem II (PSII) and photosystem I (PSI), cyclic electron flow around PSI, and state transitions. PetL is important for photoautotrophic growth as well as for electron transfer efficiency and stability of the cytochrome b6-f complex. This Tupiella akineta (Green alga) protein is Cytochrome b6-f complex subunit 6.